A 973-amino-acid polypeptide reads, in one-letter code: Vacuolar membrane protease (973 aa).

Residues 1–15 (MARQYSRTNPLGFTP) are Cytoplasmic-facing. A helical membrane pass occupies residues 16-36 (WPVTIITALVYLALVIPLLVV). Topologically, residues 37–383 (QHVVPSAPGS…STLAVFELHT (347 aa)) are vacuolar. N-linked (GlcNAc...) asparagine glycosylation is found at Asn-52 and Asn-115. Zn(2+)-binding residues include His-167 and Asp-179. The Proton acceptor role is filled by Glu-213. Zn(2+)-binding residues include Glu-214, Glu-239, and His-312. The helical transmembrane segment at 384-404 (LFALSVTLLIVAPLVLLATSI) threads the bilayer. At 405-438 (ALVRADRMYLFRSTARVPGSDDFDEGVSLQGVRG) the chain is on the cytoplasmic side. Residues 439-459 (FFRFPFLLVIPTGVAVGLAYL) traverse the membrane as a helical segment. Topologically, residues 460–469 (VTKINPYIIH) are vacuolar. A helical membrane pass occupies residues 470–490 (SSEYAVWSMMISAWVFLAWFV). Residues 491 to 504 (SRVADFARPSAFHR) lie on the Cytoplasmic side of the membrane. The helical transmembrane segment at 505–525 (VYVLTWMFVAEWVLLVIATVY) threads the bilayer. At 526-529 (ENRY) the chain is on the vacuolar side. Residues 530–550 (GLAGGYFVFFALSGTFLATWI) traverse the membrane as a helical segment. At 551-674 (SYLELFALPR…GLPKWTWVLQ (124 aa)) the chain is on the cytoplasmic side. The interval 572-623 (SRYASNHGSRLGTSSGEHGMDDAEDEEDDDGDDEDEARNVEEEPTESTSLLR) is disordered. The segment covering 574–587 (YASNHGSRLGTSSG) has biased composition (polar residues). Residues 593-607 (DAEDEEDDDGDDEDE) show a composition bias toward acidic residues. The helical transmembrane segment at 675-695 (FLLSAPIVLILVGPLALLLTA) threads the bilayer. Over 696–708 (ALRQTAQDGSSPL) the chain is Vacuolar. Residues 709–729 (FVYIAIAVLTTLLVTPLLPFI) form a helical membrane-spanning segment. The Cytoplasmic portion of the chain corresponds to 730–735 (HRYTHH). The chain crosses the membrane as a helical span at residues 736–756 (IPLFLLLVFTGTLIYNLVAFP). At 757–973 (FSPSNRLKLF…LVEGSRRFEV (217 aa)) the chain is on the vacuolar side. N-linked (GlcNAc...) asparagine glycans are attached at residues Asn-803 and Asn-839.

The protein belongs to the peptidase M28 family. Requires Zn(2+) as cofactor.

It localises to the vacuole membrane. Functionally, may be involved in vacuolar sorting and osmoregulation. The chain is Vacuolar membrane protease from Aspergillus clavatus (strain ATCC 1007 / CBS 513.65 / DSM 816 / NCTC 3887 / NRRL 1 / QM 1276 / 107).